Consider the following 88-residue polypeptide: UPF0297 protein YrzL (88 aa).

This sequence belongs to the UPF0297 family.

This chain is UPF0297 protein YrzL (yrzL), found in Bacillus subtilis (strain 168).